The chain runs to 381 residues: cAMP-dependent protein kinase type I-beta regulatory subunit (381 aa).

Residues 2-136 (ASPPACPSEE…ALAKAISKNV (135 aa)) are dimerization and phosphorylation. A Phosphoserine modification is found at serine 3. Position 21 is a 3'-nitrotyrosine (tyrosine 21). The segment at 67 to 98 (ARQKSNSQSDSHDEEVSPTPPNPVVKARRRRG) is disordered. 2 positions are modified to phosphoserine: serine 77 and serine 83. Threonine 85 carries the post-translational modification Phosphothreonine. The Pseudophosphorylation motif signature appears at 96 to 100 (RRGGV). Position 97 is an omega-N-methylarginine (arginine 97). 3',5'-cyclic AMP contacts are provided by residues 137–254 (LFAH…SKVS), glutamate 202, arginine 211, 255–381 (ILES…SLTV), glutamate 326, and arginine 335.

This sequence belongs to the cAMP-dependent kinase regulatory chain family. As to quaternary structure, the inactive holoenzyme is composed of two regulatory chains and two catalytic chains. Activation by cAMP releases the two active catalytic monomers and the regulatory dimer. Interacts with PRKX; regulates this cAMP-dependent protein kinase. Interacts with C2orf88/smAKAP; this interaction may target PRKAR1B to the plasma membrane. In terms of processing, the pseudophosphorylation site binds to the substrate-binding region of the catalytic chain, resulting in the inhibition of its activity. Four types of regulatory chains are found: I-alpha, I-beta, II-alpha, and II-beta. Their expression varies among tissues and is in some cases constitutive and in others inducible.

The protein localises to the cell membrane. Regulatory subunit of the cAMP-dependent protein kinases involved in cAMP signaling in cells. This chain is cAMP-dependent protein kinase type I-beta regulatory subunit (PRKAR1B), found in Homo sapiens (Human).